Reading from the N-terminus, the 156-residue chain is SsrA-binding protein (156 aa).

It belongs to the SmpB family.

Its subcellular location is the cytoplasm. Functionally, required for rescue of stalled ribosomes mediated by trans-translation. Binds to transfer-messenger RNA (tmRNA), required for stable association of tmRNA with ribosomes. tmRNA and SmpB together mimic tRNA shape, replacing the anticodon stem-loop with SmpB. tmRNA is encoded by the ssrA gene; the 2 termini fold to resemble tRNA(Ala) and it encodes a 'tag peptide', a short internal open reading frame. During trans-translation Ala-aminoacylated tmRNA acts like a tRNA, entering the A-site of stalled ribosomes, displacing the stalled mRNA. The ribosome then switches to translate the ORF on the tmRNA; the nascent peptide is terminated with the 'tag peptide' encoded by the tmRNA and targeted for degradation. The ribosome is freed to recommence translation, which seems to be the essential function of trans-translation. The protein is SsrA-binding protein of Paracoccus denitrificans (strain Pd 1222).